Consider the following 196-residue polypeptide: uncharacterized protein (196 aa).

This sequence belongs to the flavoredoxin family. FMN serves as cofactor.

This is an uncharacterized protein from Aquifex aeolicus (strain VF5).